A 353-amino-acid chain; its full sequence is Quinolinate synthase (353 aa).

Residues His47 and Ser68 each contribute to the iminosuccinate site. Cys113 contributes to the [4Fe-4S] cluster binding site. Residues 139–141 and Ser156 each bind iminosuccinate; that span reads YAN. Cys200 contacts [4Fe-4S] cluster. Iminosuccinate contacts are provided by residues 226-228 and Thr243; that span reads HPE. A [4Fe-4S] cluster-binding site is contributed by Cys297.

This sequence belongs to the quinolinate synthase family. Type 1 subfamily. [4Fe-4S] cluster serves as cofactor.

The protein resides in the cytoplasm. The catalysed reaction is iminosuccinate + dihydroxyacetone phosphate = quinolinate + phosphate + 2 H2O + H(+). Its pathway is cofactor biosynthesis; NAD(+) biosynthesis; quinolinate from iminoaspartate: step 1/1. Catalyzes the condensation of iminoaspartate with dihydroxyacetone phosphate to form quinolinate. This is Quinolinate synthase from Vibrio vulnificus (strain YJ016).